The primary structure comprises 288 residues: Elongation factor Ts (288 aa).

Residues 82-85 (TDFV) are involved in Mg(2+) ion dislocation from EF-Tu.

The protein belongs to the EF-Ts family.

It localises to the cytoplasm. In terms of biological role, associates with the EF-Tu.GDP complex and induces the exchange of GDP to GTP. It remains bound to the aminoacyl-tRNA.EF-Tu.GTP complex up to the GTP hydrolysis stage on the ribosome. This is Elongation factor Ts from Prosthecochloris aestuarii (strain DSM 271 / SK 413).